Consider the following 343-residue polypeptide: Heat-inducible transcription repressor HrcA (343 aa).

This sequence belongs to the HrcA family.

Negative regulator of class I heat shock genes (grpE-dnaK-dnaJ and groELS operons). Prevents heat-shock induction of these operons. This is Heat-inducible transcription repressor HrcA from Thermoanaerobacter pseudethanolicus (strain ATCC 33223 / 39E) (Clostridium thermohydrosulfuricum).